Consider the following 264-residue polypeptide: Thiazole synthase (264 aa).

Lysine 106 functions as the Schiff-base intermediate with DXP in the catalytic mechanism. 1-deoxy-D-xylulose 5-phosphate is bound by residues glycine 167, 193–194 (AG), and 215–216 (NT).

It belongs to the ThiG family. As to quaternary structure, homotetramer. Forms heterodimers with either ThiH or ThiS.

The protein resides in the cytoplasm. The catalysed reaction is [ThiS sulfur-carrier protein]-C-terminal-Gly-aminoethanethioate + 2-iminoacetate + 1-deoxy-D-xylulose 5-phosphate = [ThiS sulfur-carrier protein]-C-terminal Gly-Gly + 2-[(2R,5Z)-2-carboxy-4-methylthiazol-5(2H)-ylidene]ethyl phosphate + 2 H2O + H(+). It functions in the pathway cofactor biosynthesis; thiamine diphosphate biosynthesis. Functionally, catalyzes the rearrangement of 1-deoxy-D-xylulose 5-phosphate (DXP) to produce the thiazole phosphate moiety of thiamine. Sulfur is provided by the thiocarboxylate moiety of the carrier protein ThiS. In vitro, sulfur can be provided by H(2)S. The polypeptide is Thiazole synthase (Xanthomonas axonopodis pv. citri (strain 306)).